The chain runs to 164 residues: Mineralocorticoid receptor (164 aa).

The region spanning 1–162 is the NR LBD domain; that stretch reads QYSWMCLSSF…EFPRCWWRSS (162 aa). Residues Arg15 and Thr143 each contribute to the 21-hydroxyprogesterone site. Positions 15 and 143 each coordinate aldosterone. Arg15 and Thr143 together coordinate progesterone.

The protein belongs to the nuclear hormone receptor family. NR3 subfamily. As to quaternary structure, heteromultimeric cytoplasmic complex with HSP90, HSP70, and FKBP4, in the absence of ligand. After ligand binding, it translocates to the nucleus and binds to DNA as a homodimer and as a heterodimer with NR3C1. Binds the coactivator NCOA2. May interact with HSD11B2 in the absence of ligand. Binds the coactivators NCOA1, TIF1 and NRIP1. In terms of processing, phosphorylated.

Its subcellular location is the cytoplasm. The protein localises to the nucleus. The protein resides in the endoplasmic reticulum membrane. In terms of biological role, receptor for both mineralocorticoids (MC) such as aldosterone and glucocorticoids (GC) such as corticosterone or cortisol. Binds to mineralocorticoid response elements (MRE) and transactivates target genes. The effect of MC is to increase ion and water transport and thus raise extracellular fluid volume and blood pressure and lower potassium levels. In Sus scrofa (Pig), this protein is Mineralocorticoid receptor (NR3C2).